The chain runs to 137 residues: Large ribosomal subunit protein uL16 (137 aa).

Belongs to the universal ribosomal protein uL16 family. In terms of assembly, part of the 50S ribosomal subunit.

In terms of biological role, binds 23S rRNA and is also seen to make contacts with the A and possibly P site tRNAs. This chain is Large ribosomal subunit protein uL16, found in Acinetobacter baumannii (strain AB307-0294).